The following is a 243-amino-acid chain: Probable septum site-determining protein MinC (243 aa).

Belongs to the MinC family. Interacts with MinD and FtsZ.

Functionally, cell division inhibitor that blocks the formation of polar Z ring septums. Rapidly oscillates between the poles of the cell to destabilize FtsZ filaments that have formed before they mature into polar Z rings. Prevents FtsZ polymerization. This is Probable septum site-determining protein MinC from Agathobacter rectalis (strain ATCC 33656 / DSM 3377 / JCM 17463 / KCTC 5835 / VPI 0990) (Eubacterium rectale).